We begin with the raw amino-acid sequence, 217 residues long: Adenylate kinase (217 aa).

10-15 lines the ATP pocket; sequence GAGKGT. The segment at 30–59 is NMP; that stretch reads STGDMLRAAVKAGTPLGIEAKKVMDAGGLV. Residues threonine 31, arginine 36, 57–59, 85–88, and glutamine 92 each bind AMP; these read GLV and GFPR. Residues 122 to 159 are LID; that stretch reads GRRAHLASGRTYHVKYNPPKVEGKDDVTGEDLVQRDDD. ATP contacts are provided by residues arginine 123 and 132-133; that span reads TY. AMP contacts are provided by arginine 156 and arginine 167. Glycine 203 lines the ATP pocket.

This sequence belongs to the adenylate kinase family. Monomer.

It is found in the cytoplasm. The catalysed reaction is AMP + ATP = 2 ADP. It functions in the pathway purine metabolism; AMP biosynthesis via salvage pathway; AMP from ADP: step 1/1. In terms of biological role, catalyzes the reversible transfer of the terminal phosphate group between ATP and AMP. Plays an important role in cellular energy homeostasis and in adenine nucleotide metabolism. This chain is Adenylate kinase, found in Azoarcus sp. (strain BH72).